The sequence spans 251 residues: Prolactin-7B1 (251 aa).

Residues 1-29 (MNTSLTQLCFWALQILLMSNLLLWEDVVS) form the signal peptide. N-linked (GlcNAc...) asparagine glycosylation is found at asparagine 2 and asparagine 73. 2 cysteine pairs are disulfide-bonded: cysteine 100-cysteine 216 and cysteine 233-cysteine 241.

The protein belongs to the somatotropin/prolactin family. Expression restricted to placenta. Abundantly expressed in trophoblast cells of the junctional zone and trophoblasts migrating into the mesometrial decidua.

The protein localises to the secreted. The polypeptide is Prolactin-7B1 (Prl7b1) (Mus musculus (Mouse)).